We begin with the raw amino-acid sequence, 517 residues long: Tyrosine-protein kinase Fgr (517 aa).

Gly-2 carries N-myristoyl glycine lipidation. S-palmitoyl cysteine attachment occurs at residues Cys-3 and Cys-6. Ser-13 is subject to Phosphoserine. Tyr-32 carries the phosphotyrosine modification. At Ser-50 the chain carries Phosphoserine. The SH3 domain occupies 65-126 (TGVTIFVALY…PSNYVAPVDS (62 aa)). The tract at residues 102–103 (WW) is interaction with CLNK. The SH2 domain occupies 132–229 (WYFGKISRKD…GLCYLLTAPC (98 aa)). At Tyr-196 the chain carries Phosphotyrosine. The residue at position 206 (Ser-206) is a Phosphoserine. A Protein kinase domain is found at 251-504 (IALERRLGTG…YLQSFLEDYF (254 aa)). ATP contacts are provided by residues 257–265 (LGTGCFGDV) and Lys-279. The active-site Proton acceptor is Asp-370. Tyr-400 carries the phosphotyrosine modification. Position 511 is a phosphotyrosine; by SRC (Tyr-511).

The protein belongs to the protein kinase superfamily. Tyr protein kinase family. SRC subfamily. As to quaternary structure, interacts with ITGB1, ITGB2, MS4A2/FCER1B, FCER1G and FCGR2. Interacts (via SH2 domain) with SYK (tyrosine phosphorylated). Interacts (via SH2 domain) with FLT3 (tyrosine phosphorylated). Interacts with PTK2/FAK1. Interacts (via SH2 domain) with HCLS1 (tyrosine phosphorylated by SYK). Interacts with SIRPA and PTPNS1. Interacts (not phosphorylated on tyrosine residues) with CBL; FGR tyrosine phosphorylation promotes dissociation. Interacts with CLNK. In terms of processing, ubiquitinated. Becomes ubiquitinated in response to ITGB2 signaling; this does not lead to degradation. Phosphorylated. Autophosphorylated on tyrosine residues. Becomes phosphorylated in response to FCGR2 engagement, cell adhesion and signaling by ITGB2. Prior phosphorylation at Tyr-511 by SRC inhibits ulterior autophosphorylation at Tyr-400. In terms of tissue distribution, expressed in natural killer cells (at protein level).

The protein localises to the cell membrane. Its subcellular location is the cell projection. The protein resides in the ruffle membrane. It localises to the cytoplasm. It is found in the cytosol. The protein localises to the cytoskeleton. Its subcellular location is the mitochondrion inner membrane. The protein resides in the mitochondrion intermembrane space. The catalysed reaction is L-tyrosyl-[protein] + ATP = O-phospho-L-tyrosyl-[protein] + ADP + H(+). Its activity is regulated as follows. Activated by autophosphorylation. Prior phosphorylation at Tyr-511 by SRC inhibits ulterior autophosphorylation at Tyr-400. Activated by phorbol myristate acetate, phosphatidic acid and poly-Lys. Binding (via SH2 domain) of HCLS1 that is already phosphorylated by SYK strongly increases kinase activity. Functionally, non-receptor tyrosine-protein kinase that transmits signals from cell surface receptors devoid of kinase activity and contributes to the regulation of immune responses, including neutrophil, monocyte, macrophage and mast cell functions, cytoskeleton remodeling in response to extracellular stimuli, phagocytosis, cell adhesion and migration. Promotes mast cell degranulation, release of inflammatory cytokines and IgE-mediated anaphylaxis. Acts downstream of receptors that bind the Fc region of immunoglobulins, such as MS4A2/FCER1B, FCER1G and FCGR2. Acts downstream of ITGB1 and ITGB2, and regulates actin cytoskeleton reorganization, cell spreading and adhesion. Depending on the context, activates or inhibits cellular responses. Functions as a negative regulator of ITGB2 signaling, phagocytosis and SYK activity in monocytes. Required for normal ITGB1 and ITGB2 signaling, normal cell spreading and adhesion in neutrophils and macrophages. Functions as a positive regulator of cell migration and regulates cytoskeleton reorganization via RAC1 activation. Phosphorylates SYK (in vitro) and promotes SYK-dependent activation of AKT1 and MAP kinase signaling. Phosphorylates PLD2 in antigen-stimulated mast cells, leading to PLD2 activation and the production of the signaling molecules lysophosphatidic acid and diacylglycerol. Promotes activation of PIK3R1. Phosphorylates FASLG, and thereby regulates its ubiquitination and subsequent internalization. Phosphorylates ABL1. Promotes phosphorylation of CBL, CTTN, PIK3R1, PTK2/FAK1, PTK2B/PYK2 and VAV2. Phosphorylates HCLS1 that has already been phosphorylated by SYK, but not unphosphorylated HCLS1. Together with CLNK, it acts as a negative regulator of natural killer cell-activating receptors and inhibits interferon-gamma production. The protein is Tyrosine-protein kinase Fgr (Fgr) of Mus musculus (Mouse).